A 543-amino-acid chain; its full sequence is MFS-type transporter pyvG (543 aa).

Residues 24–71 form a disordered region; it reads PPTEQQPGFQLPPPYRLAATRTQPQQQQEQEQEQEQAKPATRPPWNEP. Residue Asn94 is glycosylated (N-linked (GlcNAc...) asparagine). The next 12 helical transmembrane spans lie at 101–121, 141–161, 178–198, 203–223, 230–250, 259–279, 335–355, 374–394, 415–435, 440–460, 476–496, and 512–532; these read LLVY…VAIF, LGMS…SPLS, IFLL…FLIL, GFFG…VTGL, LYVW…IAGF, WSMW…LFLP, PAIL…YSYF, GLIF…YFAF, LVPA…FAWT, LHWV…SLVI, ASLF…AIMW, and LLAG…WWGP.

It belongs to the major facilitator superfamily. CAR1 family.

The protein localises to the cell membrane. Functionally, MFS-type transporter; part of the gene cluster that mediates the biosynthesis of pyranoviolin A, a pyranonigrin analog with a C-3 methoxy group. May be involved in the secretion of pyranoviolin A. The polypeptide is MFS-type transporter pyvG (Aspergillus violaceofuscus (strain CBS 115571)).